A 623-amino-acid chain; its full sequence is Trehalase (623 aa).

The protein belongs to the glycosyl hydrolase 15 family. In terms of assembly, monomer.

The enzyme catalyses alpha,alpha-trehalose + H2O = alpha-D-glucose + beta-D-glucose. Its pathway is glycan degradation; trehalose degradation; D-glucose from alpha,alpha-trehalose: step 1/1. Inhibited by validamycin A. In terms of biological role, catalyzes the hydrolysis of alpha,alpha-trehalose into two molecules of D-glucose. The protein is Trehalase of Thermoplasma volcanium (strain ATCC 51530 / DSM 4299 / JCM 9571 / NBRC 15438 / GSS1).